The following is a 333-amino-acid chain: uncharacterized protein (333 aa).

This sequence to E.coli YfeH.

This is an uncharacterized protein from Pseudomonas aeruginosa (strain ATCC 15692 / DSM 22644 / CIP 104116 / JCM 14847 / LMG 12228 / 1C / PRS 101 / PAO1).